Here is a 445-residue protein sequence, read N- to C-terminus: CBL-interacting serine/threonine-protein kinase 8 (445 aa).

The Protein kinase domain occupies tyrosine 9–phenylalanine 262. Residues isoleucine 15–valine 23 and lysine 38 contribute to the ATP site. Aspartate 132 serves as the catalytic Proton acceptor. An activation loop region spans residues aspartate 150 to glutamate 177. Residue serine 154 is modified to Phosphoserine. Threonine 166 carries the phosphothreonine modification. The NAF domain maps to threonine 302 to aspartate 326. Residues lysine 333–threonine 362 form a PPI region.

Belongs to the protein kinase superfamily. CAMK Ser/Thr protein kinase family. SNF1 subfamily. As to quaternary structure, interacts with CBL1 and CBL9. Mn(2+) serves as cofactor. As to expression, mostly expressed in roots, and, to a lower extent, in leaves, stems, flowers, and siliques.

The catalysed reaction is L-seryl-[protein] + ATP = O-phospho-L-seryl-[protein] + ADP + H(+). It catalyses the reaction L-threonyl-[protein] + ATP = O-phospho-L-threonyl-[protein] + ADP + H(+). Functionally, CIPK serine-threonine protein kinases interact with CBL proteins. Binding of a CBL protein to the regulatory NAF domain of CIPK protein lead to the activation of the kinase in a calcium-dependent manner. The protein is CBL-interacting serine/threonine-protein kinase 8 (CIPK8) of Arabidopsis thaliana (Mouse-ear cress).